Reading from the N-terminus, the 112-residue chain is Ig kappa chain V-II region MOPC 167 (112 aa).

A framework-1 region spans residues 1–23; sequence DIVITQDELSNPVTSGESVSISC. A disulfide bridge links cysteine 23 with cysteine 93. The segment at 24-39 is complementarity-determining-1; that stretch reads RSSKSLLYKDGKTYLN. A framework-2 region spans residues 40–54; that stretch reads WFLQRPGQSPQLLIS. Positions 55-61 are complementarity-determining-2; sequence LMSTRAS. The segment at 62–93 is framework-3; the sequence is GVSDRFSGSGSRTDFTLEISRVKAEDVGVYYC. Positions 94–102 are complementarity-determining-3; sequence QQLVEYPLT. The tract at residues 103 to 112 is framework-4; sequence FGAGTKLELK.

The polypeptide is Ig kappa chain V-II region MOPC 167 (Mus musculus (Mouse)).